The primary structure comprises 116 residues: Large ribosomal subunit protein bL20 (116 aa).

It belongs to the bacterial ribosomal protein bL20 family.

Binds directly to 23S ribosomal RNA and is necessary for the in vitro assembly process of the 50S ribosomal subunit. It is not involved in the protein synthesizing functions of that subunit. This chain is Large ribosomal subunit protein bL20, found in Phocaeicola vulgatus (strain ATCC 8482 / DSM 1447 / JCM 5826 / CCUG 4940 / NBRC 14291 / NCTC 11154) (Bacteroides vulgatus).